The sequence spans 297 residues: uncharacterized protein (297 aa).

7 helical membrane passes run 14 to 34 (LFLM…FLKF), 55 to 75 (LLLG…IYFF), 81 to 101 (FYFG…AGAL), 110 to 130 (AIIL…RVAF), 135 to 155 (LSTL…KLLF), 163 to 183 (IVGA…YGSI), and 208 to 228 (LIMT…SKCF).

The protein resides in the cell membrane. This is an uncharacterized protein from Methanocaldococcus jannaschii (strain ATCC 43067 / DSM 2661 / JAL-1 / JCM 10045 / NBRC 100440) (Methanococcus jannaschii).